Consider the following 1869-residue polypeptide: Chitin synthase 6 (1869 aa).

The segment at 1–23 (MAMNLPPLAGSGGAHTQPSLPAL) is disordered. The 778-residue stretch at 1-778 (MAMNLPPLAG…EIAHLSEASL (778 aa)) folds into the Myosin motor domain. 104–111 (GESGSGKS) serves as a coordination point for ATP. N123, N417, N426, and N557 each carry an N-linked (GlcNAc...) asparagine glycan. 2 disordered regions span residues 593–612 (KPMR…ARNQ) and 620–640 (AEEE…AAKA). The segment covering 629–640 (ENNSQAGGAAKA) has biased composition (low complexity). 2 N-linked (GlcNAc...) asparagine glycosylation sites follow: N630 and N657. The actin-binding stretch occupies residues 655-679 (LDNVTKAVADPSTNSYFVFCLKPND). 2 consecutive transmembrane segments (helical) span residues 886 to 906 (WLFM…RFIG) and 925 to 945 (LIIW…PMLI). Residues 949 to 1010 (QHVYSAAELS…YAGKDATSLF (62 aa)) enclose the Cytochrome b5 heme-binding domain. Residues N1037, N1062, and N1165 are each glycosylated (N-linked (GlcNAc...) asparagine). A helical transmembrane segment spans residues 1201-1221 (LVLAISIMLVTIIAFKFFAAL). N1458 and N1564 each carry an N-linked (GlcNAc...) asparagine glycan. A run of 3 helical transmembrane segments spans residues 1596-1616 (LSTV…VMVI), 1622-1642 (VPVT…IIFI), and 1649-1669 (MIGW…GLPL). N1778 carries an N-linked (GlcNAc...) asparagine glycan. Positions 1811 to 1866 (LPSDDALLAEIREILRTADLMTVTKKGIKQELERRFGVPLDAKRAYINSATEALLS) constitute a DEK-C domain.

The protein in the N-terminal section; belongs to the TRAFAC class myosin-kinesin ATPase superfamily. Myosin family. In the C-terminal section; belongs to the chitin synthase family. Class V subfamily.

It is found in the cell membrane. It catalyses the reaction [(1-&gt;4)-N-acetyl-beta-D-glucosaminyl](n) + UDP-N-acetyl-alpha-D-glucosamine = [(1-&gt;4)-N-acetyl-beta-D-glucosaminyl](n+1) + UDP + H(+). In terms of biological role, polymerizes chitin, a structural polymer of the cell wall and septum, by transferring the sugar moiety of UDP-GlcNAc to the non-reducing end of the growing chitin polymer. Plays a role in cell wall integrity and is involved in tolerance to hyperosmotic conditions. Required to successfully penetrate the host plants and thus plays a key role in pathogenicity. This Verticillium dahliae (strain VdLs.17 / ATCC MYA-4575 / FGSC 10137) (Verticillium wilt) protein is Chitin synthase 6.